The chain runs to 971 residues: Protein cwh43 (971 aa).

The segment at 1 to 242 is PGAP2-like; sequence MTEKTSSLVF…PSSFATRKKE (242 aa). Helical transmembrane passes span 15–35, 71–91, 101–121, 129–149, 161–181, 188–208, 286–306, 313–333, 336–356, 366–386, 397–417, 432–452, 467–487, 509–529, 532–552, 555–575, 588–608, 622–642, and 673–693; these read VALVHTICSFAAFFIPLALAL, VFQWLIALTATPRLLVLLLWF, VIITTALGVLRTALCGGWVYV, WHDIFMIGYLISNAPWFILVS, IRNIGSALFVLTIFPLIYWYI, IPGAYTVYAFFEWSLILWDIL, VYLSFVFWSVLTSLGLLVWYF, ISGYEACILFELSPFLLGIPL, KFASKVPVIFLFLNVIGIAAY, FVTAFSVCCECLAWTSLFSNI, ISTFLFGLLASSIAKYSFFSN, QIPALIVGIIACLIFAIFHVQ, ITALSAALSLGTVLFCLHTFL, YPHGAVSIVVSICAVLVAPYL, SGAFMLIGFVLACFGSYFMYI, GWCSYLGGLIFTSYVLIYSFA, VWGGAFLVYILYSLAHVWVVA, TSYILIFIGWNLAALVPAYSG, and LLTGFCLALMALKFAIQNMPP. Residues 243-971 form a PGAP2IP-like region; sequence KGEHLSYAEA…LVVHEPWYYD (729 aa). H826 is a catalytic residue.

The protein in the N-terminal section; belongs to the PGAP2 family. In the C-terminal section; belongs to the PGAP2IP family.

It localises to the cell membrane. It is found in the endoplasmic reticulum membrane. Functionally, involved in the maintenance of cell wall integrity. Required for the replacement of the diacylglycerol moiety by ceramides during GPI-anchor maturation. The polypeptide is Protein cwh43 (cwh43) (Schizosaccharomyces pombe (strain 972 / ATCC 24843) (Fission yeast)).